We begin with the raw amino-acid sequence, 157 residues long: Transcription elongation factor GreA (157 aa).

Belongs to the GreA/GreB family.

Necessary for efficient RNA polymerase transcription elongation past template-encoded arresting sites. The arresting sites in DNA have the property of trapping a certain fraction of elongating RNA polymerases that pass through, resulting in locked ternary complexes. Cleavage of the nascent transcript by cleavage factors such as GreA or GreB allows the resumption of elongation from the new 3'terminus. GreA releases sequences of 2 to 3 nucleotides. This Bartonella tribocorum (strain CIP 105476 / IBS 506) protein is Transcription elongation factor GreA.